The chain runs to 243 residues: DNA repair protein RecO (243 aa).

Belongs to the RecO family.

In terms of biological role, involved in DNA repair and RecF pathway recombination. The chain is DNA repair protein RecO from Chlamydia trachomatis serovar L2 (strain ATCC VR-902B / DSM 19102 / 434/Bu).